Here is a 585-residue protein sequence, read N- to C-terminus: Arginine--tRNA ligase (585 aa).

Residues 131-141 carry the 'HIGH' region motif; that stretch reads ANPTGPMHVGH.

It belongs to the class-I aminoacyl-tRNA synthetase family. Monomer.

The protein localises to the cytoplasm. The enzyme catalyses tRNA(Arg) + L-arginine + ATP = L-arginyl-tRNA(Arg) + AMP + diphosphate. In Brucella anthropi (strain ATCC 49188 / DSM 6882 / CCUG 24695 / JCM 21032 / LMG 3331 / NBRC 15819 / NCTC 12168 / Alc 37) (Ochrobactrum anthropi), this protein is Arginine--tRNA ligase.